We begin with the raw amino-acid sequence, 410 residues long: Arginine deiminase (410 aa).

C398 acts as the Amidino-cysteine intermediate in catalysis.

Belongs to the arginine deiminase family.

It is found in the cytoplasm. The enzyme catalyses L-arginine + H2O = L-citrulline + NH4(+). It participates in amino-acid degradation; L-arginine degradation via ADI pathway; carbamoyl phosphate from L-arginine: step 1/2. This chain is Arginine deiminase, found in Limosilactobacillus reuteri (strain DSM 20016) (Lactobacillus reuteri).